The chain runs to 167 residues: uncharacterized protein (167 aa).

Residues 1–10 (MPLRRCRAWR) are compositionally biased toward basic residues. Residues 1-23 (MPLRRCRAWRGHSQPGTGSRSNE) are disordered.

This is an uncharacterized protein from Sinorhizobium fredii (strain NBRC 101917 / NGR234).